The sequence spans 90 residues: Small ribosomal subunit protein uS15c (90 aa).

Belongs to the universal ribosomal protein uS15 family. In terms of assembly, part of the 30S ribosomal subunit.

The protein localises to the plastid. It is found in the chloroplast. In Nandina domestica (Heavenly bamboo), this protein is Small ribosomal subunit protein uS15c (rps15).